Reading from the N-terminus, the 531-residue chain is T-complex protein 1 subunit zeta (531 aa).

N-acetylalanine is present on Ala2. Lys5 carries the N6-acetyllysine modification. Gly39 contributes to the ADP binding site. Gly39 is an ATP binding site. Asp90 serves as a coordination point for Mg(2+). The ADP site is built by Gly91, Thr92, Thr93, Ser94, Thr158, and Lys159. ATP contacts are provided by Gly91, Thr92, and Thr93. Lys199 is modified (N6-acetyllysine). The residue at position 205 (Ser205) is a Phosphoserine. Lys251 is covalently cross-linked (Glycyl lysine isopeptide (Lys-Gly) (interchain with G-Cter in SUMO2)). 4 positions are modified to N6-acetyllysine: Lys287, Lys365, Lys377, and Lys388. Ala411 serves as a coordination point for ADP. The ATP site is built by Ala411, Gly412, Asp496, and Lys501. Residue Asp496 coordinates ADP.

Belongs to the TCP-1 chaperonin family. In terms of assembly, component of the chaperonin-containing T-complex (TRiC), a hexadecamer composed of two identical back-to-back stacked rings enclosing a protein folding chamber. Each ring is made up of eight different subunits: TCP1/CCT1, CCT2, CCT3, CCT4, CCT5, CCT6A/CCT6, CCT7, CCT8. Interacts with PACRG.

Its subcellular location is the cytoplasm. The enzyme catalyses ATP + H2O = ADP + phosphate + H(+). Its function is as follows. Component of the chaperonin-containing T-complex (TRiC), a molecular chaperone complex that assists the folding of actin, tubulin and other proteins upon ATP hydrolysis. The TRiC complex mediates the folding of WRAP53/TCAB1, thereby regulating telomere maintenance. This chain is T-complex protein 1 subunit zeta (CCT6A), found in Bos taurus (Bovine).